The following is a 284-amino-acid chain: Bifunctional protein FolD (284 aa).

Residues 165–167 and Ser190 each bind NADP(+); that span reads GRS.

This sequence belongs to the tetrahydrofolate dehydrogenase/cyclohydrolase family. Homodimer.

The enzyme catalyses (6R)-5,10-methylene-5,6,7,8-tetrahydrofolate + NADP(+) = (6R)-5,10-methenyltetrahydrofolate + NADPH. It catalyses the reaction (6R)-5,10-methenyltetrahydrofolate + H2O = (6R)-10-formyltetrahydrofolate + H(+). It functions in the pathway one-carbon metabolism; tetrahydrofolate interconversion. In terms of biological role, catalyzes the oxidation of 5,10-methylenetetrahydrofolate to 5,10-methenyltetrahydrofolate and then the hydrolysis of 5,10-methenyltetrahydrofolate to 10-formyltetrahydrofolate. The polypeptide is Bifunctional protein FolD (Streptococcus equi subsp. equi (strain 4047)).